A 430-amino-acid chain; its full sequence is Glutamate-1-semialdehyde 2,1-aminomutase (430 aa).

Lys265 carries the post-translational modification N6-(pyridoxal phosphate)lysine.

This sequence belongs to the class-III pyridoxal-phosphate-dependent aminotransferase family. HemL subfamily. Homodimer. The cofactor is pyridoxal 5'-phosphate.

The protein localises to the cytoplasm. The enzyme catalyses (S)-4-amino-5-oxopentanoate = 5-aminolevulinate. The protein operates within porphyrin-containing compound metabolism; protoporphyrin-IX biosynthesis; 5-aminolevulinate from L-glutamyl-tRNA(Glu): step 2/2. The chain is Glutamate-1-semialdehyde 2,1-aminomutase from Shewanella sp. (strain MR-4).